The sequence spans 152 residues: Transcriptional regulator MraZ (152 aa).

SpoVT-AbrB domains are found at residues 5 to 52 (HSNR…PMPE) and 81 to 124 (ATEV…DQGR).

Belongs to the MraZ family. As to quaternary structure, forms oligomers.

It is found in the cytoplasm. It localises to the nucleoid. The protein is Transcriptional regulator MraZ of Solidesulfovibrio magneticus (strain ATCC 700980 / DSM 13731 / RS-1) (Desulfovibrio magneticus).